We begin with the raw amino-acid sequence, 181 residues long: Segregation and condensation protein B (181 aa).

This sequence belongs to the ScpB family. As to quaternary structure, homodimer. Homodimerization may be required to stabilize the binding of ScpA to the Smc head domains. Component of a cohesin-like complex composed of ScpA, ScpB and the Smc homodimer, in which ScpA and ScpB bind to the head domain of Smc. The presence of the three proteins is required for the association of the complex with DNA.

It localises to the cytoplasm. In terms of biological role, participates in chromosomal partition during cell division. May act via the formation of a condensin-like complex containing Smc and ScpA that pull DNA away from mid-cell into both cell halves. The polypeptide is Segregation and condensation protein B (Desulforamulus reducens (strain ATCC BAA-1160 / DSM 100696 / MI-1) (Desulfotomaculum reducens)).